The chain runs to 593 residues: Aspartate--tRNA ligase (593 aa).

L-aspartate is bound at residue Glu180. Residues 204 to 207 (QIFK) form an aspartate region. Arg226 lines the L-aspartate pocket. ATP is bound by residues 226 to 228 (RDE) and Gln235. His453 is a binding site for L-aspartate. Glu487 contributes to the ATP binding site. Arg494 provides a ligand contact to L-aspartate. 539–542 (GLDR) provides a ligand contact to ATP.

The protein belongs to the class-II aminoacyl-tRNA synthetase family. Type 1 subfamily. As to quaternary structure, homodimer.

The protein resides in the cytoplasm. The enzyme catalyses tRNA(Asp) + L-aspartate + ATP = L-aspartyl-tRNA(Asp) + AMP + diphosphate. Functionally, catalyzes the attachment of L-aspartate to tRNA(Asp) in a two-step reaction: L-aspartate is first activated by ATP to form Asp-AMP and then transferred to the acceptor end of tRNA(Asp). The sequence is that of Aspartate--tRNA ligase from Clostridium botulinum (strain Loch Maree / Type A3).